A 125-amino-acid polypeptide reads, in one-letter code: Large ribosomal subunit protein bL12 (125 aa).

Belongs to the bacterial ribosomal protein bL12 family. As to quaternary structure, homodimer. Part of the ribosomal stalk of the 50S ribosomal subunit. Forms a multimeric L10(L12)X complex, where L10 forms an elongated spine to which 2 to 4 L12 dimers bind in a sequential fashion. Binds GTP-bound translation factors.

Its function is as follows. Forms part of the ribosomal stalk which helps the ribosome interact with GTP-bound translation factors. Is thus essential for accurate translation. The sequence is that of Large ribosomal subunit protein bL12 from Ruthia magnifica subsp. Calyptogena magnifica.